The chain runs to 302 residues: D-alanine--D-alanine ligase (302 aa).

The ATP-grasp domain maps to K100–E295. Position 126-180 (Q126–T180) interacts with ATP. 3 residues coordinate Mg(2+): D250, E262, and N264.

This sequence belongs to the D-alanine--D-alanine ligase family. Mg(2+) serves as cofactor. The cofactor is Mn(2+).

Its subcellular location is the cytoplasm. It catalyses the reaction 2 D-alanine + ATP = D-alanyl-D-alanine + ADP + phosphate + H(+). The protein operates within cell wall biogenesis; peptidoglycan biosynthesis. Functionally, cell wall formation. This Maridesulfovibrio salexigens (strain ATCC 14822 / DSM 2638 / NCIMB 8403 / VKM B-1763) (Desulfovibrio salexigens) protein is D-alanine--D-alanine ligase.